Consider the following 598-residue polypeptide: MFKISRKNYSDLYGITTGDSVRLGDTNLWVKVEKDLTTYGEESVFGGGKTLREGMGMNSTMKLDDKLGNAEVMDLVITNALIVDYTGIYKADIGIKNGKIAAIGKSGNPHLTDNVDMIVGISTEISAGEGKIYTAGGLDTHVHWLEPEIVPVALDGGITTVIAGGTGMNDGTKATTVSPGKFWVKSALQAADGLSINAGFLAKGQGMEDPIFEQIAAGACGLKIHEDWGATGNAIDLALTVADKTDVAVAIHTDTLNEAGFVEHTIAAMKGRTIHAYHTEGAGGGHAPDILETVKYAHILPASTNPTIPYTVNTIAEHLDMLMVCHHLNPKVPEDVAFADSRIRSQTIAAEDLLHDMGAISIMSSDTLAMGRIGEVATRTWQMAHKMKAQFGSLKGDSEFSDNNRVKRYISKYTINPAIAHGVDSYIGSLEVGKLADIVAWEPKFFGAKPYYVVKMGVIARCVAGDPNASIPTCEPVIMRDQFGTYGRLLTNTSVSFVSKIGLENGIKEEYKLEKELLPVKNCRSVNKKSMKWNSATPNLEVDPQTFDAAVDFNDLENWLEQSASELAKKLKKTSSGKYILDAEPLTEAPLAQRYFLF.

Ni(2+) is bound by residues histidine 141, histidine 143, and lysine 223. Lysine 223 is modified (N6-carboxylysine). Histidine 225 serves as a coordination point for substrate. Ni(2+) is bound by residues histidine 252 and histidine 278. Histidine 326 acts as the Proton donor in catalysis. Residue aspartate 366 coordinates Ni(2+).

The protein belongs to the metallo-dependent hydrolases superfamily. Urease alpha subunit family. As to quaternary structure, heterotrimer of UreA (gamma), UreB (beta) and UreC (alpha) subunits. Three heterotrimers associate to form the active enzyme. Requires Ni cation as cofactor. In terms of processing, carboxylation allows a single lysine to coordinate two nickel ions.

Its subcellular location is the cytoplasm. It carries out the reaction urea + 2 H2O + H(+) = hydrogencarbonate + 2 NH4(+). The protein operates within nitrogen metabolism; urea degradation; CO(2) and NH(3) from urea (urease route): step 1/1. In Ureaplasma parvum serovar 3 (strain ATCC 27815 / 27 / NCTC 11736), this protein is Urease subunit alpha.